Reading from the N-terminus, the 275-residue chain is Formamidopyrimidine-DNA glycosylase (275 aa).

Proline 2 (schiff-base intermediate with DNA) is an active-site residue. The active-site Proton donor is the glutamate 3. Lysine 59 functions as the Proton donor; for beta-elimination activity in the catalytic mechanism. Histidine 92, arginine 111, and lysine 155 together coordinate DNA. Residues 240 to 274 (YVYGQTGEPCRRCGHEIEKMKLGGRGTHYCPHCQQ) form an FPG-type zinc finger. The active-site Proton donor; for delta-elimination activity is the arginine 264.

It belongs to the FPG family. As to quaternary structure, monomer. The cofactor is Zn(2+).

The catalysed reaction is Hydrolysis of DNA containing ring-opened 7-methylguanine residues, releasing 2,6-diamino-4-hydroxy-5-(N-methyl)formamidopyrimidine.. It carries out the reaction 2'-deoxyribonucleotide-(2'-deoxyribose 5'-phosphate)-2'-deoxyribonucleotide-DNA = a 3'-end 2'-deoxyribonucleotide-(2,3-dehydro-2,3-deoxyribose 5'-phosphate)-DNA + a 5'-end 5'-phospho-2'-deoxyribonucleoside-DNA + H(+). Functionally, involved in base excision repair of DNA damaged by oxidation or by mutagenic agents. Acts as a DNA glycosylase that recognizes and removes damaged bases. Has a preference for oxidized purines, such as 7,8-dihydro-8-oxoguanine (8-oxoG). Has AP (apurinic/apyrimidinic) lyase activity and introduces nicks in the DNA strand. Cleaves the DNA backbone by beta-delta elimination to generate a single-strand break at the site of the removed base with both 3'- and 5'-phosphates. The protein is Formamidopyrimidine-DNA glycosylase of Exiguobacterium sp. (strain ATCC BAA-1283 / AT1b).